The sequence spans 944 residues: Protocadherin gamma-C5 (944 aa).

An N-terminal signal peptide occupies residues 1-29 (MGPKTLPQLAGKWQVLCMLSLCCWGWVSG). Cadherin domains are found at residues 30–133 (QLRY…SPSF), 134–242 (ATPE…APTF), 243–350 (QSSV…APEV), 351–454 (LLAS…APRF), 455–564 (NQQL…APAV), and 571–677 (WEHS…MPKS). The Extracellular portion of the chain corresponds to 30-693 (QLRYSVVEES…PPERSDLTLY (664 aa)). N-linked (GlcNAc...) asparagine glycosylation is found at Asn-265, Asn-443, and Asn-547. A helical transmembrane segment spans residues 694-714 (LIVALATVSLLSLVTFTFLSA). Topologically, residues 715–944 (KCLQGNADGD…KKKSGKKEKK (230 aa)) are cytoplasmic. 3 disordered regions span residues 722 to 747 (DGDGGGGQCCRRQDSPSPDFYKQSSP), 812 to 853 (SNTL…WPNN), and 914 to 944 (ATLTNAAGKRDGKAPAGGNGNKKKSGKKEKK). Residues 820-853 (QQAPPNTDWRFSQAQRPGTSGSQNGDDTGTWPNN) show a composition bias toward polar residues. Over residues 934 to 944 (NKKKSGKKEKK) the composition is skewed to basic residues.

The protein localises to the cell membrane. Functionally, potential calcium-dependent cell-adhesion protein. May be involved in the establishment and maintenance of specific neuronal connections in the brain. In Homo sapiens (Human), this protein is Protocadherin gamma-C5 (PCDHGC5).